A 96-amino-acid polypeptide reads, in one-letter code: Co-chaperonin GroES (96 aa).

This sequence belongs to the GroES chaperonin family. As to quaternary structure, heptamer of 7 subunits arranged in a ring. Interacts with the chaperonin GroEL.

It localises to the cytoplasm. In terms of biological role, together with the chaperonin GroEL, plays an essential role in assisting protein folding. The GroEL-GroES system forms a nano-cage that allows encapsulation of the non-native substrate proteins and provides a physical environment optimized to promote and accelerate protein folding. GroES binds to the apical surface of the GroEL ring, thereby capping the opening of the GroEL channel. This Shewanella piezotolerans (strain WP3 / JCM 13877) protein is Co-chaperonin GroES.